Consider the following 248-residue polypeptide: 5'-nucleotidase SurE (248 aa).

A divalent metal cation is bound by residues Asp-8, Asp-9, Ser-39, and Asn-91.

This sequence belongs to the SurE nucleotidase family. A divalent metal cation serves as cofactor.

It localises to the cytoplasm. It carries out the reaction a ribonucleoside 5'-phosphate + H2O = a ribonucleoside + phosphate. Functionally, nucleotidase that shows phosphatase activity on nucleoside 5'-monophosphates. The chain is 5'-nucleotidase SurE from Pseudoalteromonas atlantica (strain T6c / ATCC BAA-1087).